A 550-amino-acid chain; its full sequence is MRFNPQDWKEKSHTNFEGAWHDGPSVITPPGEDKKYPRLRYTRAQPHPIFATINRLREIYLSMGFDECENPVIVEESDIYRQFGPEAMAVLDRVFYIGGLPRPNVGISRKQLDEINDILQSHRSPLVHGHEIPAGDSGNKEPFRPMSRETEEQLRETLHAYKKSEIDGDELTHELAKVLGVDDGIVVHILDSVFPEFRSLVPESSRSTLRSHMTSGWFMTLGSLWERTPLPIKLFSVDRCFRREQAEGPTRLMTYHSASCVVAREDVTIEDGKAVSEALLSAFGYEDFRFQPDDKRSKYYMPDSQTEVYAKHPVHGWVEVATFGMYSPSALGEYGIGVPVMNLGLGVERLAMIAYNANDVRQLSYPQFFPRLAGDREIACAVHLREEPVTVEGKALALAIARVAAAHATEQGPCSFTVWEGTLYGRNVNVIIEETEANAKLCGPACANEIFVHEGNILGVPDNEKWKDVRIKGIPTGISYLSAVSALAAANIEHAARCGTGTQVQVKMAKHPGDINLKIEEYAMRTITDTKKKVDVRGPVFLAVRSEIAE.

The disordered stretch occupies residues 1–32; sequence MRFNPQDWKEKSHTNFEGAWHDGPSVITPPGE. Residues 212 to 214, 257 to 259, 299 to 300, and Asn-342 each bind substrate; these read HMT, SAS, and YY.

This sequence belongs to the class-II aminoacyl-tRNA synthetase family. O-phosphoseryl-tRNA(Cys) synthetase subfamily. In terms of assembly, homotetramer. Interacts with SepCysS.

The catalysed reaction is tRNA(Cys) + O-phospho-L-serine + ATP = O-phospho-L-seryl-tRNA(Cys) + AMP + diphosphate. Functionally, catalyzes the attachment of O-phosphoserine (Sep) to tRNA(Cys). The chain is O-phosphoserine--tRNA(Cys) ligase from Methanoregula boonei (strain DSM 21154 / JCM 14090 / 6A8).